Reading from the N-terminus, the 343-residue chain is Tryptophan--tRNA ligase (343 aa).

ATP-binding positions include Q15 to T17 and G24 to N25. The 'HIGH' region signature appears at P16–N25. Position 145 (D145) interacts with L-tryptophan. ATP contacts are provided by residues G157–D159, I196, and K205–S209. A 'KMSKS' region motif is present at residues K205–S209.

This sequence belongs to the class-I aminoacyl-tRNA synthetase family. Homodimer.

It localises to the cytoplasm. It carries out the reaction tRNA(Trp) + L-tryptophan + ATP = L-tryptophyl-tRNA(Trp) + AMP + diphosphate + H(+). Functionally, catalyzes the attachment of tryptophan to tRNA(Trp). In Mycobacterium leprae (strain TN), this protein is Tryptophan--tRNA ligase.